Reading from the N-terminus, the 232-residue chain is Ribose-5-phosphate isomerase A (232 aa).

Substrate contacts are provided by residues 28-31 (TGST), 83-86 (DGAD), and 96-99 (KGGG). Glu105 acts as the Proton acceptor in catalysis. Lys123 is a substrate binding site.

This sequence belongs to the ribose 5-phosphate isomerase family. In terms of assembly, homodimer.

It catalyses the reaction aldehydo-D-ribose 5-phosphate = D-ribulose 5-phosphate. The protein operates within carbohydrate degradation; pentose phosphate pathway; D-ribose 5-phosphate from D-ribulose 5-phosphate (non-oxidative stage): step 1/1. Its function is as follows. Catalyzes the reversible conversion of ribose-5-phosphate to ribulose 5-phosphate. The polypeptide is Ribose-5-phosphate isomerase A (Nitrobacter hamburgensis (strain DSM 10229 / NCIMB 13809 / X14)).